A 176-amino-acid chain; its full sequence is Large ribosomal subunit protein uL6 (176 aa).

This sequence belongs to the universal ribosomal protein uL6 family. As to quaternary structure, part of the 50S ribosomal subunit.

In terms of biological role, this protein binds to the 23S rRNA, and is important in its secondary structure. It is located near the subunit interface in the base of the L7/L12 stalk, and near the tRNA binding site of the peptidyltransferase center. This is Large ribosomal subunit protein uL6 from Paraburkholderia phytofirmans (strain DSM 17436 / LMG 22146 / PsJN) (Burkholderia phytofirmans).